Here is a 538-residue protein sequence, read N- to C-terminus: Putative outer membrane porin BglH (538 aa).

Residues 1–25 form the signal peptide; sequence MFRQNLITSAILLMAPLAFSAQSLA. The disordered stretch occupies residues 52-82; the sequence is KDEEKKKYTPATVNRSVSTNDQGYAANPFPT. The segment covering 62–73 has biased composition (polar residues); it reads ATVNRSVSTNDQ.

This sequence belongs to the porin LamB (TC 1.B.3) family.

The protein localises to the cell outer membrane. In terms of biological role, may be a sugar porin with a broad carbohydrate specificity. This chain is Putative outer membrane porin BglH (bglH), found in Shigella flexneri.